Reading from the N-terminus, the 155-residue chain is SsrA-binding protein (155 aa).

It belongs to the SmpB family.

It localises to the cytoplasm. Required for rescue of stalled ribosomes mediated by trans-translation. Binds to transfer-messenger RNA (tmRNA), required for stable association of tmRNA with ribosomes. tmRNA and SmpB together mimic tRNA shape, replacing the anticodon stem-loop with SmpB. tmRNA is encoded by the ssrA gene; the 2 termini fold to resemble tRNA(Ala) and it encodes a 'tag peptide', a short internal open reading frame. During trans-translation Ala-aminoacylated tmRNA acts like a tRNA, entering the A-site of stalled ribosomes, displacing the stalled mRNA. The ribosome then switches to translate the ORF on the tmRNA; the nascent peptide is terminated with the 'tag peptide' encoded by the tmRNA and targeted for degradation. The ribosome is freed to recommence translation, which seems to be the essential function of trans-translation. This Streptococcus agalactiae serotype Ia (strain ATCC 27591 / A909 / CDC SS700) protein is SsrA-binding protein.